A 369-amino-acid chain; its full sequence is uncharacterized protein (369 aa).

9 helical membrane passes run glutamine 25 to tryptophan 45, phenylalanine 47 to glutamate 67, leucine 119 to methionine 139, isoleucine 152 to leucine 172, glycine 206 to isoleucine 226, leucine 235 to leucine 255, leucine 268 to isoleucine 288, leucine 295 to phenylalanine 315, and tryptophan 323 to phenylalanine 343.

This sequence to B.subtilis ComEC.

It is found in the cell membrane. This is an uncharacterized protein from Mycoplasma pneumoniae (strain ATCC 29342 / M129 / Subtype 1) (Mycoplasmoides pneumoniae).